The primary structure comprises 779 residues: Abnormal cell migration protein 10 (779 aa).

The segment covering 78–97 has biased composition (acidic residues); it reads NELEADTEEDIAETADDEES. Disordered stretches follow at residues 78–105, 189–217, and 242–302; these read NELEADTEEDIAETADDEESKDPVEKTE, SSSRENVKSISTLPPPPPALSYHQTPQQP, and AASS…NAEE. The span at 189–200 shows a compositional bias: polar residues; the sequence is SSSRENVKSIST. Residues 242 to 254 are compositionally biased toward low complexity; the sequence is AASSCSSPDGDSA. The segment covering 256–293 has biased composition (polar residues); sequence GDSSSTESSNNRCRNSAFSSNDSCRDSLNTPSPTQVSP. The Ras-associating domain occupies 317–407; the sequence is EAKVTKIFVK…NKLYFMRRPD (91 aa). One can recognise a PH domain in the interval 456–566; the sequence is PPEMEGFLYL…WLVALRIAKN (111 aa). 2 stretches are compositionally biased toward polar residues: residues 645-660 and 688-698; these read SFSVNSCQQSHPSRTS and RASTSSPTIPQ. The interval 645-763 is disordered; sequence SFSVNSCQQS…SPMAPAKNDL (119 aa). Residues 708-729 show a composition bias toward pro residues; that stretch reads PAPPPVASVMRMPPPVTPPKPC.

Belongs to the MRL family. May interact (via Ras-associating and PH domains) with ced-10 (GTP-bound form).

The protein resides in the perikaryon. In terms of biological role, required cell non-autonomously for proper development of the excretory canals and for the long-range anterior-posterior migrations of embryonic neurons CAN, ALM and HSN. Plays a role, probably downstream of ced-10/rac1, in orientating axonal growth of HSN and AVM neurons in response to guidance cues such as slt-1. May regulate growth cone polarization by promoting asymmetric F-actin assembly. May be involved in signal transduction during cell migration. This is Abnormal cell migration protein 10 from Caenorhabditis elegans.